A 131-amino-acid chain; its full sequence is UPF0102 protein AZC_4471 (131 aa).

The protein belongs to the UPF0102 family.

The sequence is that of UPF0102 protein AZC_4471 from Azorhizobium caulinodans (strain ATCC 43989 / DSM 5975 / JCM 20966 / LMG 6465 / NBRC 14845 / NCIMB 13405 / ORS 571).